Consider the following 226-residue polypeptide: Thiopurine S-methyltransferase (226 aa).

S-adenosyl-L-methionine is bound by residues W16, M51, E72, and R131.

Belongs to the class I-like SAM-binding methyltransferase superfamily. TPMT family.

It is found in the cytoplasm. It carries out the reaction S-adenosyl-L-methionine + a thiopurine = S-adenosyl-L-homocysteine + a thiopurine S-methylether.. The chain is Thiopurine S-methyltransferase from Francisella tularensis subsp. tularensis (strain SCHU S4 / Schu 4).